A 211-amino-acid chain; its full sequence is Molybdenum cofactor guanylyltransferase (211 aa).

GTP is bound by residues 12 to 14 (LAG), Lys25, Asn53, Asp71, and Asp101. Asp101 lines the Mg(2+) pocket.

The protein belongs to the MobA family. In terms of assembly, monomer. Mg(2+) serves as cofactor.

The protein localises to the cytoplasm. The enzyme catalyses Mo-molybdopterin + GTP + H(+) = Mo-molybdopterin guanine dinucleotide + diphosphate. Functionally, transfers a GMP moiety from GTP to Mo-molybdopterin (Mo-MPT) cofactor (Moco or molybdenum cofactor) to form Mo-molybdopterin guanine dinucleotide (Mo-MGD) cofactor. The protein is Molybdenum cofactor guanylyltransferase of Acidovorax ebreus (strain TPSY) (Diaphorobacter sp. (strain TPSY)).